A 237-amino-acid polypeptide reads, in one-letter code: Lectin alpha chain (237 aa).

Residues Glu-8 and Asp-10 each coordinate Mn(2+). Asp-10, Tyr-12, Asn-14, and Asp-19 together coordinate Ca(2+). Tyr-12 contacts a carbohydrate. The Mn(2+) site is built by Asp-19, His-24, and Ser-34. Residue Leu-99–Tyr-100 coordinates a carbohydrate. Asp-208 contributes to the Ca(2+) binding site. Arg-228 serves as a coordination point for a carbohydrate.

It belongs to the leguminous lectin family. Equilibrium between homodimer and homotetramer. Oligomerization is pH-dependent with homotetramers forming at pH 6.5 and above. Post-translationally, the beta and gamma chains are produced by partial proteolytic processing of the lectin alpha chain by an asparaginyl endopeptidase. Mixture of 60% alpha lectin and 40% of its beta and gamma proteolytic fragments. In terms of tissue distribution, seed.

The protein resides in the vacuole. It localises to the aleurone grain. In terms of biological role, D-mannose/D-glucose-binding lectin. Induces histamine release in mast cells from hamster and rat. Induces lymphocyte proliferation and IFNG production. The sequence is that of Lectin alpha chain from Macropsychanthus bicolor (Dioclea rostrata).